The following is a 120-amino-acid chain: MVYLQTVNEFFTQSKSLTEAYPKTTKLSIKYRTNEQSQNYLIAKAFESASGICLKYRTDKAAELGRLLLIANKLSYVSTGNEIPPEPEQEVVASPVTEQKKAEPSAPPKGSKKKKRGKKK.

The tract at residues 79-120 (TGNEIPPEPEQEVVASPVTEQKKAEPSAPPKGSKKKKRGKKK) is disordered. Positions 110-120 (GSKKKKRGKKK) are enriched in basic residues.

This is an uncharacterized protein from Schizosaccharomyces pombe (strain 972 / ATCC 24843) (Fission yeast).